Reading from the N-terminus, the 160-residue chain is uncharacterized protein (160 aa).

The first 18 residues, 1–18 (MELLSLAILSSFFAVANQ), serve as a signal peptide directing secretion.

This is an uncharacterized protein from Caenorhabditis elegans.